The primary structure comprises 305 residues: Oxygen-dependent coproporphyrinogen-III oxidase (305 aa).

S98 is a binding site for substrate. 2 residues coordinate a divalent metal cation: H102 and H112. Catalysis depends on H112, which acts as the Proton donor. Residue 114-116 participates in substrate binding; that stretch reads NVR. A divalent metal cation contacts are provided by H151 and H181. An important for dimerization region spans residues 246-281; the sequence is YVEFNLVYDRGTLFGLQSGGRTESILMSMPPLARWE. 264 to 266 contributes to the substrate binding site; the sequence is GGR.

This sequence belongs to the aerobic coproporphyrinogen-III oxidase family. Homodimer. A divalent metal cation is required as a cofactor.

The protein resides in the cytoplasm. The enzyme catalyses coproporphyrinogen III + O2 + 2 H(+) = protoporphyrinogen IX + 2 CO2 + 2 H2O. It functions in the pathway porphyrin-containing compound metabolism; protoporphyrin-IX biosynthesis; protoporphyrinogen-IX from coproporphyrinogen-III (O2 route): step 1/1. Its function is as follows. Involved in the heme biosynthesis. Catalyzes the aerobic oxidative decarboxylation of propionate groups of rings A and B of coproporphyrinogen-III to yield the vinyl groups in protoporphyrinogen-IX. The sequence is that of Oxygen-dependent coproporphyrinogen-III oxidase from Vibrio parahaemolyticus serotype O3:K6 (strain RIMD 2210633).